The following is a 760-amino-acid chain: Probable splicing factor 3A subunit 1 (760 aa).

Residues 16–58 form an SURP motif 1 repeat; that stretch reads IIDKTAAYAAKLGESFENKVKQREGHNAKFNFMKEGDQYYPYY. Residues 77-147 show a composition bias toward low complexity; that stretch reads AAAANPKTPS…QQQTTPVFEK (71 aa). Residues 77 to 165 are disordered; it reads AAAANPKTPS…PKKEPTQPDP (89 aa). The stretch at 183 to 225 is one SURP motif 2 repeat; it reads TIRLTAQFIAKNGDSFFMELASREVKNSQFDFLKPTNHLYEWF. Positions 259-290 form a coiled coil; the sequence is ERAMNRCEYNQLKEIEEQKKEEREDEEKTIIA. Disordered regions lie at residues 309 to 348, 360 to 393, 442 to 464, 487 to 509, 544 to 583, and 624 to 657; these read DLDD…GGQD, DDED…QSKL, QQRD…TNTL, ETES…WDGH, SQQQ…GMMP, and PGLM…EPQS. Acidic residues predominate over residues 360 to 373; the sequence is DDEDNNNNEDEIEE. Low complexity-rich tracts occupy residues 374-385 and 454-464; these read SSLSSTNTTGNL and SNNNNNLTNTL. A compositionally biased stretch (basic and acidic residues) spans 487 to 496; it reads ETESSKKQDE. Composition is skewed to low complexity over residues 544 to 557 and 629 to 649; these read SQQQ…QQLQ and PPTQ…SSSS. Positions 655–677 are required and sufficient for nuclear import; the sequence is PQSKKLKIDDVLIPESVWLQNNP. Residues 680–757 enclose the Ubiquitin-like domain; it reads VNLTVEMADK…VTCGQKKKGG (78 aa).

The protein belongs to the SF3A1 family. As to quaternary structure, component of splicing factor SF3A which associates with the splicing factor SF3B and a 12S RNA unit to form the mature 17S U2 small nuclear ribonucleoprotein complex (17S U2 snRNP). Identified in the spliceosome 'E' complex, a precursor of the spliceosome 'A' complex. Identified in the spliceosome 'A' and 'B' complexes. Identified in the spliceosome 'C' complex.

The protein resides in the nucleus. In terms of biological role, involved in pre-mRNA splicing as a component of the splicing factor SF3A complex that contributes to the assembly of the 17S U2 snRNP, and the subsequent assembly of the spliceosome. The polypeptide is Probable splicing factor 3A subunit 1 (sf3a1) (Dictyostelium discoideum (Social amoeba)).